Consider the following 387-residue polypeptide: Phosphoglycerate kinase (387 aa).

Substrate-binding positions include 21 to 23 (DLN), R36, 59 to 62 (HLGR), R113, and R146. Residues K197, E314, and 340 to 343 (GGDT) each bind ATP.

Belongs to the phosphoglycerate kinase family. Monomer.

Its subcellular location is the cytoplasm. The enzyme catalyses (2R)-3-phosphoglycerate + ATP = (2R)-3-phospho-glyceroyl phosphate + ADP. The protein operates within carbohydrate degradation; glycolysis; pyruvate from D-glyceraldehyde 3-phosphate: step 2/5. In Marinomonas sp. (strain MWYL1), this protein is Phosphoglycerate kinase.